The following is a 158-amino-acid chain: Cyclic pyranopterin monophosphate synthase (158 aa).

Substrate-binding positions include 75 to 77 (LCH) and 113 to 114 (ME). The active site involves Asp128.

Belongs to the MoaC family. In terms of assembly, homohexamer; trimer of dimers.

The enzyme catalyses (8S)-3',8-cyclo-7,8-dihydroguanosine 5'-triphosphate = cyclic pyranopterin phosphate + diphosphate. It functions in the pathway cofactor biosynthesis; molybdopterin biosynthesis. Functionally, catalyzes the conversion of (8S)-3',8-cyclo-7,8-dihydroguanosine 5'-triphosphate to cyclic pyranopterin monophosphate (cPMP). The sequence is that of Cyclic pyranopterin monophosphate synthase from Azorhizobium caulinodans (strain ATCC 43989 / DSM 5975 / JCM 20966 / LMG 6465 / NBRC 14845 / NCIMB 13405 / ORS 571).